A 367-amino-acid polypeptide reads, in one-letter code: MTVMKFDLIKKEGKARRGKISFPRGDIQTPAFMPVGTYGAVKSLSPVELKEMGAEIILGNTFHLWLRPGTEIIKKHGSLHGFNGWDKPILTDSGGFQVFSLGKMRKLTEEGVTFKSPINGSKVFLSPEISMQVQRDLGSDIVMCFDECTPYPATEKEAKESMELSMRWAKRSKDAHGDNPSALFGIIQGGMYEHLRDESLAKLKEIDFDGFAIGGLSVGEPKEDMIRILDHTAHQMPEDKPRYLMGVGTPKDLVEAVYRGVDMFDCVMPSRNARNGHIFTSEGVIKIRNSKYKDDTSPLDPNCDCYTCKNFTKSYLHHLDKTKEILGSRLNTIHNLTFYQNLMKSIRKALDEGRFAEFRKEFLANYK.

Aspartate 92 functions as the Proton acceptor in the catalytic mechanism. Substrate contacts are provided by residues 92–96 (DSGGF), aspartate 146, glutamine 188, and glycine 215. The tract at residues 246–252 (GVGTPKD) is RNA binding. The active-site Nucleophile is aspartate 265. The Zn(2+) site is built by cysteine 303, cysteine 305, cysteine 308, and histidine 334.

The protein belongs to the queuine tRNA-ribosyltransferase family. In terms of assembly, homodimer. Within each dimer, one monomer is responsible for RNA recognition and catalysis, while the other monomer binds to the replacement base PreQ1. It depends on Zn(2+) as a cofactor.

It carries out the reaction 7-aminomethyl-7-carbaguanine + guanosine(34) in tRNA = 7-aminomethyl-7-carbaguanosine(34) in tRNA + guanine. Its pathway is tRNA modification; tRNA-queuosine biosynthesis. In terms of biological role, catalyzes the base-exchange of a guanine (G) residue with the queuine precursor 7-aminomethyl-7-deazaguanine (PreQ1) at position 34 (anticodon wobble position) in tRNAs with GU(N) anticodons (tRNA-Asp, -Asn, -His and -Tyr). Catalysis occurs through a double-displacement mechanism. The nucleophile active site attacks the C1' of nucleotide 34 to detach the guanine base from the RNA, forming a covalent enzyme-RNA intermediate. The proton acceptor active site deprotonates the incoming PreQ1, allowing a nucleophilic attack on the C1' of the ribose to form the product. After dissociation, two additional enzymatic reactions on the tRNA convert PreQ1 to queuine (Q), resulting in the hypermodified nucleoside queuosine (7-(((4,5-cis-dihydroxy-2-cyclopenten-1-yl)amino)methyl)-7-deazaguanosine). This is Queuine tRNA-ribosyltransferase from Francisella tularensis subsp. novicida (strain U112).